The following is a 205-amino-acid chain: ATP-dependent Clp protease proteolytic subunit (205 aa).

Serine 109 (nucleophile) is an active-site residue. Histidine 134 is a catalytic residue.

The protein belongs to the peptidase S14 family. Fourteen ClpP subunits assemble into 2 heptameric rings which stack back to back to give a disk-like structure with a central cavity, resembling the structure of eukaryotic proteasomes.

It localises to the cytoplasm. It carries out the reaction Hydrolysis of proteins to small peptides in the presence of ATP and magnesium. alpha-casein is the usual test substrate. In the absence of ATP, only oligopeptides shorter than five residues are hydrolyzed (such as succinyl-Leu-Tyr-|-NHMec, and Leu-Tyr-Leu-|-Tyr-Trp, in which cleavage of the -Tyr-|-Leu- and -Tyr-|-Trp bonds also occurs).. Cleaves peptides in various proteins in a process that requires ATP hydrolysis. Has a chymotrypsin-like activity. Plays a major role in the degradation of misfolded proteins. This chain is ATP-dependent Clp protease proteolytic subunit, found in Buchnera aphidicola subsp. Baizongia pistaciae (strain Bp).